A 240-amino-acid chain; its full sequence is MPRTLTDPTADRAAAFATDAAADGLTVSLIGSCVATLTGRSQRDLAAGVRTLLWKPDDTVVVHGASGRDPDAWASGGPVTVDAADGLTVACDGGHTAGALRVRFDAVHTATAFDAAGADATTVSGTEAALKDRVLDTPDLVEPGFQPLATERDTPAGPIDIYGRDADGTVTAVELKNVRAGPAAASQLQRYVAALRRTLHADATVRGILVAPAVTAKTRRLLADRGLTFSPVSPPGSRDR.

Belongs to the NucS endonuclease family.

The protein resides in the cytoplasm. Its function is as follows. Cleaves both 3' and 5' ssDNA extremities of branched DNA structures. The polypeptide is Endonuclease NucS 1 (Halobacterium salinarum (strain ATCC 700922 / JCM 11081 / NRC-1) (Halobacterium halobium)).